The sequence spans 164 residues: Nucleotide-binding protein Daro_3028 (164 aa).

The protein belongs to the YajQ family.

Nucleotide-binding protein. In Dechloromonas aromatica (strain RCB), this protein is Nucleotide-binding protein Daro_3028.